The primary structure comprises 412 residues: Putative competence-damage inducible protein (412 aa).

Belongs to the CinA family.

In Clostridium perfringens (strain SM101 / Type A), this protein is Putative competence-damage inducible protein.